The sequence spans 358 residues: 2'-5'-oligoadenylate synthase 1A (358 aa).

The interval 14 to 61 (DKFIEVYLLPNTSFRDDVKSAINVLCDFLKERCFRDTVHPVRVSKVVK) is interaction with dsRNA. S64 is a binding site for ATP. Mg(2+) contacts are provided by D76, D78, and D149. Positions 201–211 (QRPTKLKSLIR) are interaction with dsRNA. 3 residues coordinate ATP: R211, K214, and Q231.

Belongs to the 2-5A synthase family. Monomer. Homotetramer. Interacts with OAS1D. The cofactor is Mg(2+).

It localises to the cytoplasm. The protein localises to the mitochondrion. Its subcellular location is the nucleus. It is found in the microsome. The protein resides in the endoplasmic reticulum. It catalyses the reaction 3 ATP = 5'-triphosphoadenylyl-(2'-&gt;5')-adenylyl-(2'-&gt;5')-adenosine + 2 diphosphate. Its activity is regulated as follows. Produced as a latent enzyme which is activated by dsRNA generated during the course of viral infection. The dsRNA activator must be at least 15 nucleotides long, and no modification of the 2'-hydroxyl group is tolerated. ssRNA or dsDNA do not act as activators. In terms of biological role, interferon-induced, dsRNA-activated antiviral enzyme which plays a critical role in cellular innate antiviral response. In addition, it may also play a role in other cellular processes such as apoptosis, cell growth, differentiation and gene regulation. Synthesizes higher oligomers of 2'-5'-oligoadenylates (2-5A) from ATP which then bind to the inactive monomeric form of ribonuclease L (RNase L) leading to its dimerization and subsequent activation. Activation of RNase L leads to degradation of cellular as well as viral RNA, resulting in the inhibition of protein synthesis, thus terminating viral replication. Can mediate the antiviral effect via the classical RNase L-dependent pathway or an alternative antiviral pathway independent of RNase L. The chain is 2'-5'-oligoadenylate synthase 1A (Oas1a) from Rattus norvegicus (Rat).